The sequence spans 3678 residues: Dystrophin (3678 aa).

The actin-binding stretch occupies residues 1–240; it reads MLWWEEVEDC…YITSLFQVLP (240 aa). Calponin-homology (CH) domains follow at residues 15–119 and 134–240; these read DVQK…LHWQ and TNSE…QVLP. Residues 63-72 are ANK2- and ANK-3 binding; the sequence is PKEKGSTRVH. The interval 313–333 is disordered; the sequence is DSTQSPYPSQHLEAPRDKSLD. 24 Spectrin repeats span residues 341–449, 450–558, 561–669, 721–830, 832–936, 945–1047, 1050–1156, 1159–1265, 1268–1369, 1370–1465, 1470–1570, 1573–1678, 1681–1780, 1781–1876, 1879–1981, 1994–2103, 2106–2210, 2213–2318, 2319–2416, 2468–2570, 2573–2679, 2682–2795, 2801–2923, and 2928–3033; these read VNLD…KLHK, VLMD…VLQD, LKWQ…QISQ, ELRK…WLEY, TNII…ELQT, RYQE…KLEE, NKLR…ALKA, DKTV…TLEE, ACWH…LLEQ, SIQS…LFQK, EQRL…QLEK, KLSR…LLLE, KHME…KASI, PLKE…KALE, HQWY…TLHE, DVSY…RFDR, EKWR…RIEE, NVLS…ELEV, HLKD…LRTK, FNRA…QLNE, KDST…ALEE, RLLQ…HLEA, KRLH…RKID, and RLQE…QLHE. Residues 1417–1915 are interaction with SYNM; sequence SDLTSHEISL…PEPRDERKLK (499 aa). The 34-residue stretch at 3048–3081 folds into the WW domain; sequence TSVQGPWERAISPNKVPYYINHETQTTCWDHPKM. An interaction with SYNM region spans residues 3051 to 3401; that stretch reads QGPWERAISP…TVLEGDNMET (351 aa). Residues 3301 to 3357 form a ZZ-type; degenerate zinc finger; it reads KHQAKCNICKECPIIGFRYRSLKHFNYDICQSCFFSGRVAKGHKMHYPMVEYCTPTT. Cys-3306, Cys-3309, Cys-3330, and Cys-3333 together coordinate Zn(2+). The tract at residues 3459–3511 is binds to SNTB1; it reads DDEHLLIQHYCQSLNQDSPLSQPRSPAQILISLESEERGELERILADLEEENR. A phosphoserine mark is found at Ser-3476, Ser-3483, and Ser-3493. Disordered stretches follow at residues 3521-3547 and 3596-3678; these read KQQH…QSPR and EAKV…EDTM. Composition is skewed to polar residues over residues 3600-3619 and 3655-3665; these read NGTT…SSQP and QLNNSFPSSRG. 6 positions are modified to phosphoserine: Ser-3605, Ser-3606, Ser-3610, Ser-3616, Ser-3617, and Ser-3659.

Interacts with SYNM. Interacts with the syntrophins SNTG1 and SNTG2. Interacts with KRT19. Component of the dystrophin-associated glycoprotein complex which is composed of three subcomplexes: a cytoplasmic complex comprised of DMD (or UTRN), DTNA and a number of syntrophins, such as SNTB1, SNTB2, SNTG1 and SNTG2, the transmembrane dystroglycan complex, and the sarcoglycan-sarcospan complex. Interacts with DAG1 (betaDAG1) with DMD; the interaction is inhibited by phosphorylation on the PPXY motif of DAG1. Interacts with SYNM; SNTA1 and SNTB1. Interacts with CMYA5. Directly interacts with ANK2 and ANK3; these interactions do not interfere with betaDAG1-binding and are necessary for proper localization in muscle cells. Identified in a dystroglycan complex that contains at least PRX, DRP2, UTRN, DMD and DAG1. Interacts with DTNB. Interacts with PGM5; the interaction is direct. Interacts with NOS1; localizes NOS1 to sarcolemma in muscle cells. Detected in quadriceps muscle and in sciatic nerve (at protein level). Expressed in the sarcolemma of the soleus muscle (at protein level). Differentially expressed during skeletal muscle, heart, and brain development. Also expressed in retina.

The protein resides in the cell membrane. It localises to the sarcolemma. It is found in the cytoplasm. The protein localises to the cytoskeleton. Its subcellular location is the postsynaptic cell membrane. Anchors the extracellular matrix to the cytoskeleton via F-actin. Ligand for dystroglycan. Component of the dystrophin-associated glycoprotein complex which accumulates at the neuromuscular junction (NMJ) and at a variety of synapses in the peripheral and central nervous systems and has a structural function in stabilizing the sarcolemma. Also implicated in signaling events and synaptic transmission. The sequence is that of Dystrophin (Dmd) from Mus musculus (Mouse).